The sequence spans 21 residues: Peptide Hact-2 (21 aa).

Disulfide bonds link Cys1-Cys18, Cys5-Cys14, and Cys9-Cys20.

In terms of tissue distribution, expressed in tentacles.

The protein resides in the nematocyst. It localises to the secreted. Functionally, peptide of unknown function. Does not exhibit antimicrobial activity against Escherichia coli and Staphylococcus aureus. Promotes cell proliferation of human fibroblast skin cells. Does not exhibit any effect on voltage-gated ion channels, including potassium, sodium, and calcium channels. This Heliofungia actiniformis (Mushroom coral) protein is Peptide Hact-2.